Consider the following 140-residue polypeptide: Non-specific lipid transfer protein GPI-anchored 33 (140 aa).

The signal sequence occupies residues 1–27; that stretch reads MAYTNKVTISAAVATMMLFLAVTIVDA. 4 disulfides stabilise this stretch: Cys-40–Cys-80, Cys-52–Cys-64, Cys-65–Cys-104, and Cys-78–Cys-112. A glycan (N-linked (GlcNAc...) asparagine) is linked at Asn-91. A lipid anchor (GPI-anchor amidated glycine) is attached at Gly-115. The propeptide at 116–140 is removed in mature form; sequence DASGGSTNKIAASMVLLGLVASLFF.

This sequence belongs to the plant LTP family.

The protein localises to the cell membrane. Probable lipid transfer protein. This Arabidopsis thaliana (Mouse-ear cress) protein is Non-specific lipid transfer protein GPI-anchored 33.